The sequence spans 165 residues: MVDVQTQRKQIEKLISLNRVTKVVKGGRRFSFAAFMVVGDGEGHVGWGFGKANDASDAIKKSLTSARKNLRFVSIRKGTLPHEVIGCFKKAKVLIKPATHGTGVIAGGPVRAVMEALGVHDILSKSLGSNNSMNVVKATFKAFDLVLNAEKVAEMRGKTLKTLWG.

The S5 DRBM domain maps to 10–73; it reads QIEKLISLNR…TSARKNLRFV (64 aa).

The protein belongs to the universal ribosomal protein uS5 family. In terms of assembly, part of the 30S ribosomal subunit. Contacts proteins S4 and S8.

Its function is as follows. With S4 and S12 plays an important role in translational accuracy. Located at the back of the 30S subunit body where it stabilizes the conformation of the head with respect to the body. The polypeptide is Small ribosomal subunit protein uS5 (Borreliella afzelii (strain PKo) (Borrelia afzelii)).